A 156-amino-acid polypeptide reads, in one-letter code: Small ribosomal subunit protein uS7 (156 aa).

The protein belongs to the universal ribosomal protein uS7 family. As to quaternary structure, part of the 30S ribosomal subunit. Contacts proteins S9 and S11.

One of the primary rRNA binding proteins, it binds directly to 16S rRNA where it nucleates assembly of the head domain of the 30S subunit. Is located at the subunit interface close to the decoding center, probably blocks exit of the E-site tRNA. This chain is Small ribosomal subunit protein uS7, found in Streptococcus sanguinis (strain SK36).